Reading from the N-terminus, the 530-residue chain is Bifunctional purine biosynthesis protein PurH (530 aa).

Residues 1–148 enclose the MGS-like domain; it reads MNNARPIRRA…KNHKDVTIVV (148 aa).

It belongs to the PurH family.

It carries out the reaction (6R)-10-formyltetrahydrofolate + 5-amino-1-(5-phospho-beta-D-ribosyl)imidazole-4-carboxamide = 5-formamido-1-(5-phospho-D-ribosyl)imidazole-4-carboxamide + (6S)-5,6,7,8-tetrahydrofolate. It catalyses the reaction IMP + H2O = 5-formamido-1-(5-phospho-D-ribosyl)imidazole-4-carboxamide. Its pathway is purine metabolism; IMP biosynthesis via de novo pathway; 5-formamido-1-(5-phospho-D-ribosyl)imidazole-4-carboxamide from 5-amino-1-(5-phospho-D-ribosyl)imidazole-4-carboxamide (10-formyl THF route): step 1/1. It functions in the pathway purine metabolism; IMP biosynthesis via de novo pathway; IMP from 5-formamido-1-(5-phospho-D-ribosyl)imidazole-4-carboxamide: step 1/1. The sequence is that of Bifunctional purine biosynthesis protein PurH from Aliivibrio fischeri (strain ATCC 700601 / ES114) (Vibrio fischeri).